Consider the following 192-residue polypeptide: GTP cyclohydrolase 1 (192 aa).

Zn(2+)-binding residues include cysteine 81, histidine 84, and cysteine 153.

This sequence belongs to the GTP cyclohydrolase I family. Toroid-shaped homodecamer, composed of two pentamers of five dimers.

The enzyme catalyses GTP + H2O = 7,8-dihydroneopterin 3'-triphosphate + formate + H(+). Its pathway is cofactor biosynthesis; 7,8-dihydroneopterin triphosphate biosynthesis; 7,8-dihydroneopterin triphosphate from GTP: step 1/1. The chain is GTP cyclohydrolase 1 from Streptococcus mutans serotype c (strain ATCC 700610 / UA159).